Consider the following 1842-residue polypeptide: MAVRKLVPETAPVVDDAPASTSVDHKRSLAHKLLIELLSYQLALPVRWIETQNELLQWPETIQRYVEVGPRTTLVTMAKKTAARRASSQIVSASKLSTLKFLCTSDNTAEIYYEYPQESGAPVEEEGSKSDAAAPALAVSGSSRTATTAKATVTTPSSSSPETAPPAASTPSQGTPAGGSTTPDIPLSAKHVVLAMIAQKFRRAFDNIPTQKTVQELSGGKSTLQNEIMGDLAVEFGQLPDGGEYIPLDALGDALQGNFPGKPGKQMSSLITKLISRKMPGGFNQAAMQNHLEREWGFSKAHGQVVICLAITVEPESRLESADSAREFLDGLVSRYASYAGITMTPRGKGNVSADHSSAVMVDESVLNGIKREQRDYQIKELELLSKHLQLDTAADDAVLNELRASQKSLEEKLDRWASEFDDKFFSGIEAIFDARKVRQYDSWWNWAREDTMRLLSRMRPGQLPLQHLQEQGLVAQLLRRWEPSCAEIVQNFLDTGECKEPFLATAAEILRLGSDALKKSPVYRFTTPSMKPRTVISATGCVEYSEVPRENSSYIALLKQGLVAASGERVPYVHLKKKAPDQAWRYDAQSTEILLEALGTGSGAGLTFSGKTVLVTGAGPNSIGAAVVRGLLNGGAKVIVTTSRSVSSAASFFQRMYRECAARGATMAVVPFNQASKRDCESLVEYIYGAHSPVDGDLDYLVPFGAIPEKVELSKLDGASELAHRAMLVNILRILGLVYKEKEQRGLRTRPTTVIVPLSFNLGGFGGDGLYPESKIGLEALFNRYFSGNWSDYLSICGAAIGWVRGTTLSQSIRLLGEAIEHANGLDVITFSQEEMAFNILALMTPSIAETCEEGPVYADLTGGAKAIANIKDVMAAARAKFLKESSIQKALLAERAYEQRVLYGSESPRNDTSSPRPRLSTKRARLSLEFPEVPSKSDLKAHLVDLQGMVDLSRTVVVVGFSELGPWGNARTRWQMEHLTDLTPEGYIEMAWIMGLVEHFQGHLDGKPFVGWVDAQTKQPVADAEFKEKYQAHILAHAGLRFVEPDLLGGYDPSKKEFLQEIVVEEALPSFSTSKANADAFRLRLGDKVAVRRMPESDEYLVQVKRGAHFFVPKAVPFNRGVAGLLPAGWDPLRYGIPEDIVQQVDPVTLYALCCVSEALLSAGIRDPYELYRYIHVSELANCLGTGAGAQSAAQRLYKKRYLDHAVQSDILSESFLNTTAAWVNMLVFSSTGPIKTPVGACATAIESLDIGCDAIRSGRSQVALVGGYDDFREEASYEFAMMNATASSVGELAQGRLPREMSRPSTTTRGGFVESAGCGVQLIMNAELAIEMGLPIHAIIAYTQMAGDKIGRSIPAPGQGILTAARETSAGHDSALLDLAHRRKRLTDEVDAVHQWVTQQLAATRGPAGWPDRAIDEIEATALRKIKHAQHAWGNDIRCQDPSISPLKASLATWGLTIDDVQVVSMHGTSTKANDTNEADVISQQMDHLGRRPGNPLLAVCQKALTGHPKGAAGAWQLHGCMQMLQTGIVPGNRNADNIDSKLRQHRHIVYPMESMPMPQLKAAMLTSFGFGQKGGIAVVVAARHLFSAMAEDELEAYRRRVAKRQREADSAYVSGIMSKSLFKAKEVSVWGKSDASMSRMLLDPKARVGGHPENNNNNNNNSSSKRNTSIERLTRLLLPSQKPETEASPEGQQSTSLTASIQALLASQSTTRPTSTSIGVDVEAISSIPMGNAVFLERNFTRSERDHCFSSPTPQASFAGRWSAKEAVFKSLQTPSVGAGAAMAEIEIVSDGGVPKVQLHGRAKEVALAKGIRNIQASITHSGETVTAVALAESSPMC.

Residues 120–184 (GAPVEEEGSK…TPAGGSTTPD (65 aa)) are disordered. Residues 140–175 (SGSSRTATTAKATVTTPSSSSPETAPPAASTPSQGT) show a composition bias toward low complexity. In terms of domain architecture, Carrier spans 184–262 (DIPLSAKHVV…DALQGNFPGK (79 aa)). Ser-222 is subject to O-(pantetheine 4'-phosphoryl)serine. Positions 611-807 (GKTVLVTGAG…CGAAIGWVRG (197 aa)) are beta-ketoacyl reductase. In terms of domain architecture, Ketosynthase family 3 (KS3) spans 1058 to 1585 (KEFLQEIVVE…QKGGIAVVVA (528 aa)). Residues Cys-1244, His-1470, and His-1511 each act as for beta-ketoacyl synthase activity in the active site. The interval 1649 to 1672 (KARVGGHPENNNNNNNNSSSKRNT) is disordered. The segment covering 1658-1668 (NNNNNNNNSSS) has biased composition (low complexity). Mg(2+)-binding residues include Asp-1725, Val-1726, and Glu-1727. Residues 1725-1727 (DVE), Ser-1761, 1770-1780 (EAVFKSLQTPS), and 1823-1825 (ITH) contribute to the acetyl-CoA site. Mg(2+)-binding residues include Thr-1824 and His-1825.

Belongs to the thiolase-like superfamily. Fungal fatty acid synthetase subunit alpha family. As to quaternary structure, [Alpha(6)beta(6)] hexamers of two multifunctional subunits (alpha and beta).

It catalyses the reaction acetyl-CoA + n malonyl-CoA + 2n NADPH + 4n H(+) = a long-chain-acyl-CoA + n CoA + n CO2 + 2n NADP(+).. It carries out the reaction a fatty acyl-[ACP] + malonyl-[ACP] + H(+) = a 3-oxoacyl-[ACP] + holo-[ACP] + CO2. The catalysed reaction is a (3R)-hydroxyacyl-[ACP] + NADP(+) = a 3-oxoacyl-[ACP] + NADPH + H(+). The protein operates within secondary metabolite biosynthesis. Its function is as follows. Fatty acid synthase alpha subunit; part of the gene cluster that mediates the biosynthesis of azaphilone pigments (MonAzPs), a complex mixture of compounds with a common azaphilone skeleton very widely used as food colorants. PigJ and pigK form the two subunits of a dedicated fungal fatty acid synthase (FAS) that produces the side chain fatty acyl moiety of MonAzPs, a beta-keto fatty acid. The chain length control of the pigJ-pigK FAS is somewhat flexible as MonAzPs features either a beta-ketooctanoic or a beta-ketodecanoic acid moiety. The beta-ketoacyl-ACP probably serves as the substrate for the acetyltransferase pigD that directly transfers the fatty acyl chain to the C-4 alcohol of the pyran ring. The first step of the pathway is performed by the nrPKS pigA that forms the hexaketide precursor from successive condensations of five malonyl-CoA units, with a simple acetyl-CoA starter unit. The role of esterase pigG is not clear, but it may play at most a supplementary role in the formation of the benzaldehyde produced by the pigA nrPKS. This very reactive benzaldehyde is intercepted by the pigC ketoreductase that to provide the first stable enzyme-free MonAzPs intermediate, 6-(4-hydroxy-2-oxopentyl)-3-methyl-2,4-dioxocyclohexane carbaldehyde, also known as M7PKS-1. The FAD-dependent monooxygenase pigN hydroxylates M7PKS-1 at C-4, which triggers the formation of the pyran ring. PigJ, pigK and pigD are involved in the acetylation of the pyran ring. PigJ and pigK form the two subunits of a dedicated fungal FAS that produces the side chain fatty acyl moiety of MonAzPs and pigD transfers the fatty acyl chain to the C-4 alcohol. PigM and pigO are involved in the elimination of the omega-1 alcohol. PigM acts as an O-acetyltransferase that synthesizes the putative O-11 acetyl intermediate whereas pigO eliminates acetic acid to yield an intermediate with a C10(11) double bond. The dehydration of the C-11 alcohol followed by the reduction of the C6(7) double bond by the NAD(P)H-dependent oxidoreductase pigE increases the electrophilicity of the C-5 ketone of the resulting acyl benzopyran. This in turn sets up the C-5 ketone for an intramolecular Knoevenagel aldol condensation with the C-20 enol of the side chain. This condensation affords the characteristic linear tricyclic carbon skeletons of the yellow pigments that serve as the common precursors for the classical yellow pigments monascin and ankaflavin, orange pigments rubopunctatin and monascorubrin, and red pigments ribropunctamine and monascorubramine. The FAD-dependent oxidoreductase pigF is especially invoved in the biosynthesis of orange and red pigments via desaturation of C6(7). This chain is Fatty acid synthase alpha subunit pigJ, found in Monascus ruber (Mold).